We begin with the raw amino-acid sequence, 330 residues long: Probable xanthine dehydrogenase subunit A (330 aa).

Could be composed of four subunits: PucA, PucC, PucD and PucE.

The enzyme catalyses xanthine + NAD(+) + H2O = urate + NADH + H(+). It carries out the reaction hypoxanthine + NAD(+) + H2O = xanthine + NADH + H(+). The protein operates within purine metabolism; hypoxanthine degradation; urate from hypoxanthine: step 1/2. It participates in purine metabolism; hypoxanthine degradation; urate from hypoxanthine: step 2/2. Its function is as follows. Oxidizes hypoxanthine and xanthine to uric acid. PucA subunit could exert a molybdenum cofactor recruiting function. This is Probable xanthine dehydrogenase subunit A (pucA) from Bacillus subtilis (strain 168).